The following is a 103-amino-acid chain: UPF0473 protein SGO_2040 (103 aa).

The protein belongs to the UPF0473 family.

This is UPF0473 protein SGO_2040 from Streptococcus gordonii (strain Challis / ATCC 35105 / BCRC 15272 / CH1 / DL1 / V288).